We begin with the raw amino-acid sequence, 979 residues long: Glycine dehydrogenase (decarboxylating) (979 aa).

An N6-(pyridoxal phosphate)lysine modification is found at Lys726.

The protein belongs to the GcvP family. The glycine cleavage system is composed of four proteins: P, T, L and H. Requires pyridoxal 5'-phosphate as cofactor.

It catalyses the reaction N(6)-[(R)-lipoyl]-L-lysyl-[glycine-cleavage complex H protein] + glycine + H(+) = N(6)-[(R)-S(8)-aminomethyldihydrolipoyl]-L-lysyl-[glycine-cleavage complex H protein] + CO2. The glycine cleavage system catalyzes the degradation of glycine. The P protein binds the alpha-amino group of glycine through its pyridoxal phosphate cofactor; CO(2) is released and the remaining methylamine moiety is then transferred to the lipoamide cofactor of the H protein. The polypeptide is Glycine dehydrogenase (decarboxylating) (Ralstonia pickettii (strain 12J)).